Here is a 223-residue protein sequence, read N- to C-terminus: Phosphoribosylformylglycinamidine synthase subunit PurQ (223 aa).

The region spanning 4–223 (FAVIVFPGTN…FKSIVEWMKK (220 aa)) is the Glutamine amidotransferase type-1 domain. The active-site Nucleophile is the C85. Residues H196 and E198 contribute to the active site.

As to quaternary structure, part of the FGAM synthase complex composed of 1 PurL, 1 PurQ and 2 PurS subunits.

The protein localises to the cytoplasm. The catalysed reaction is N(2)-formyl-N(1)-(5-phospho-beta-D-ribosyl)glycinamide + L-glutamine + ATP + H2O = 2-formamido-N(1)-(5-O-phospho-beta-D-ribosyl)acetamidine + L-glutamate + ADP + phosphate + H(+). It catalyses the reaction L-glutamine + H2O = L-glutamate + NH4(+). It participates in purine metabolism; IMP biosynthesis via de novo pathway; 5-amino-1-(5-phospho-D-ribosyl)imidazole from N(2)-formyl-N(1)-(5-phospho-D-ribosyl)glycinamide: step 1/2. Part of the phosphoribosylformylglycinamidine synthase complex involved in the purines biosynthetic pathway. Catalyzes the ATP-dependent conversion of formylglycinamide ribonucleotide (FGAR) and glutamine to yield formylglycinamidine ribonucleotide (FGAM) and glutamate. The FGAM synthase complex is composed of three subunits. PurQ produces an ammonia molecule by converting glutamine to glutamate. PurL transfers the ammonia molecule to FGAR to form FGAM in an ATP-dependent manner. PurS interacts with PurQ and PurL and is thought to assist in the transfer of the ammonia molecule from PurQ to PurL. This is Phosphoribosylformylglycinamidine synthase subunit PurQ from Pyrococcus horikoshii (strain ATCC 700860 / DSM 12428 / JCM 9974 / NBRC 100139 / OT-3).